The chain runs to 507 residues: MESKIVSKAKRLHFVLIPLMAQGHLIPMVDISKILARQGNIVTIVTTPQNASRFAKTVDRARLESGLEINVVKFPIPYKEFGLPKDCETLDTLPSKDLLRRFYDAVDKLQEPMERFLEQQDIPPSCIISDKCLFWTSRTAKRFKIPRIVFHGMCCFSLLSSHNIHLHSPHLSVSSAVEPFPIPGMPHRIEIARAQLPGAFEKLANMDDVREKMRESESEAFGVIVNSFQELEPGYAEAYAEAINKKVWFVGPVSLCNDRMADLFDRGSNGNIAISETECLQFLDSMRPRSVLYVSLGSLCRLIPNQLIELGLGLEESGKPFIWVIKTEEKHMIELDEWLKRENFEERVRGRGIVIKGWSPQAMILSHGSTGGFLTHCGWNSTIEAICFGVPMITWPLFAEQFLNEKLIVEVLNIGVRVGVEIPVRWGDEERLGVLVKKPSVVKAIKLLMDQDCQRVDENDDDNEFVRRRRRIQELAVMAKKAVEEKGSSSINVSILIQDVLEQLSLV.

Residues serine 298, 359–361 (SPQ), 376–384 (HCGWNSTIE), and 398–401 (FAEQ) each bind UDP-alpha-D-glucose.

Belongs to the UDP-glycosyltransferase family.

This is UDP-glycosyltransferase 73D1 (UGT73D1) from Arabidopsis thaliana (Mouse-ear cress).